A 264-amino-acid chain; its full sequence is NADH dehydrogenase [ubiquinone] iron-sulfur protein 3, mitochondrial (264 aa).

The N-terminal 36 residues, 1–36, are a transit peptide targeting the mitochondrion; that stretch reads MAAAAVARLWWRGILGASALTRGTGRPSVLLLPVRR.

Belongs to the complex I 30 kDa subunit family. In terms of assembly, core subunit of respiratory chain NADH dehydrogenase (Complex I) which is composed of 45 different subunits. Interacts with NDUFAF3. Interacts with RAB5IF. Found in subcomplexes containing subunits NDUFS2, MT-ND1 and NDUFA13.

The protein localises to the mitochondrion inner membrane. It carries out the reaction a ubiquinone + NADH + 5 H(+)(in) = a ubiquinol + NAD(+) + 4 H(+)(out). In terms of biological role, core subunit of the mitochondrial membrane respiratory chain NADH dehydrogenase (Complex I) which catalyzes electron transfer from NADH through the respiratory chain, using ubiquinone as an electron acceptor. Essential for the catalytic activity and assembly of complex I. This chain is NADH dehydrogenase [ubiquinone] iron-sulfur protein 3, mitochondrial (NDUFS3), found in Homo sapiens (Human).